Here is a 1453-residue protein sequence, read N- to C-terminus: Leucine-rich repeat-containing protein 9 (1453 aa).

7 LRR repeats span residues 53-78 (FPNLTSLTIVAQDIKEISGLEPCLQL), 97-119 (CRNLEKLYLYFNKISKIENLEKL), 120-141 (IKLKVLWLNHNTIKNIEGLQTL), 142-164 (KNLKDLNLAGNLINSIGRCLDSN), 166-188 (QLERLNLSGNQICSFKELTNLTR), 224-248 (LQRFDTLDVSAKQIKELADTTAMKK), and 264-287 (KEDLEKLNDQKCKLQKLPEERVKL). The interval 302–321 (LKGSGKGHSDGSNNSKVTDP) is disordered. 23 LRR repeats span residues 344 to 367 (LNALNERVTFWNKKLDEIEAIYHI), 671 to 693 (KARPKLISLDDKTILSLAKTSVY), 694 to 715 (SHIVSLNLHGNSLSKLRDLSKL), 716 to 737 (TGLRKLNISFNEFTCLDDVYHL), 739 to 758 (NLEYLDASHNHVITLEGFRG), 759 to 784 (LMKLKHLDLSWNQLKKSGNEINMLCK), 786 to 812 (TTSLLTLDIQHNPWQKPATLRLSVIGR), 886 to 908 (YLKITALNLDGQHLFEITNLEKL), 909 to 930 (ENLKWASFSNNNLTKMEGLESC), 931 to 952 (INLEELTLDGNCISKIEGISKM), 953 to 975 (TKLTRLSINNNLLTGWEEHTFDN), 976 to 1001 (MLHLHSLSLENNRITSLSGLQKSFTL), 1023 to 1048 (LCNLVILDMCGNIIIWNQENYRLFVI), 1092 to 1115 (FKQMQELNWTSSSIRTVDLIPVDQ), 1116 to 1138 (FRNVCNVNLQNNHLTSFSGLIYL), 1139 to 1161 (PNVKVLCLNYNHIESIMPRLKPQ), 1201 to 1224 (MHSLEVLHLGYNGICNLIQLQLNR), 1225 to 1247 (LRNLKFLFLQGNEISQVEGLDNL), 1248 to 1270 (VVLQELVVDHNRIRSFNDSAFAK), 1272 to 1292 (SSLLALHLEENRLRELGKLQS), 1293 to 1317 (LVKLEKLFLGYNKIQDITELEKLDV), 1319 to 1345 (STLRELTVYGNPICRKMLHRHMLIFRL), and 1365 to 1388 (EFHLAELQAKKNSLIPVTHSPMDG).

This chain is Leucine-rich repeat-containing protein 9 (LRRC9), found in Homo sapiens (Human).